The following is a 636-amino-acid chain: MYNVRGDLNRKTPSDGNVNEIGSMYASRDTSTSSFTNPTDSSTRLLYNNASNATFSSAALAAGVGGTRASGYTHRFSIRPSSQTYNRYPNGGNSAGSDMYSTSPQNNSIVDDIENINKLEAVAFAGPTAGESDFSLSREDKEIDDFLHYPLPAKDAKKLSYFVGGEGLMQLLFLLFLAAGTGMLFIGLPILTYTGHNSLASTRVTGITNHQFRILRLLRYGSLIDPDTPESAYTFDSQDLGTLDLVFSDEFNYPGRAFYDGDDQFWLATDLHYAATTDYEYYDADTPTTANGTLRLRMDAFYNHDLNFRSGMVTTWNKLCFKGGRIEVSASLGGSPYIPGFWPGIWTIGNLVRPGYLATSDGVWPYSYNSCDAGITPNQSDPSGISYLGGQRLNQCVCKGEDHPNVGTGRGGPEIDALEGTFGSGIPYNGSIYLETMPVVSQSAQYAPFDLYMYPNYDFVTIYNQSVSAMNGWAGGVYQQALSCASQLNNSWLSGNAYQKYGFDYKPGSGPDALISWFVGDEYTWTMRQPAVGQNGNIASRPVSEEPMIVVLNFGISPTWIYFYWYELTFPQTMYVDYVRIYQDSSDSSSVLGCDPEGFPTTEYIANHPKAYLNYNATSWSEAGYVRPKNSLMDGC.

2 disordered regions span residues 1–22 (MYNV…NEIG) and 81–107 (SSQT…PQNN). Residues 1–170 (MYNVRGDLNR…YFVGGEGLMQ (170 aa)) are Cytoplasmic-facing. Residues 171–191 (LLFLLFLAAGTGMLFIGLPIL) form a helical; Signal-anchor for type II membrane protein membrane-spanning segment. Over 192–636 (TYTGHNSLAS…RPKNSLMDGC (445 aa)) the chain is Lumenal. The region spanning 218 to 587 (LRYGSLIDPD…YVRIYQDSSD (370 aa)) is the GH16 domain. 6 N-linked (GlcNAc...) asparagine glycosylation sites follow: N291, N378, N429, N464, N489, and N616.

Belongs to the SKN1/KRE6 family.

It is found in the endoplasmic reticulum membrane. Functionally, required for synthesis of the major beta-glucans of the yeast cell wall. This is an uncharacterized protein from Schizosaccharomyces pombe (strain 972 / ATCC 24843) (Fission yeast).